We begin with the raw amino-acid sequence, 246 residues long: Uridylate kinase (246 aa).

Lysine 11–glycine 14 contacts ATP. Residue glycine 53 participates in UMP binding. Positions 54 and 58 each coordinate ATP. UMP contacts are provided by residues aspartate 73 and threonine 134 to threonine 141. Residues threonine 161, tyrosine 167, and aspartate 170 each contribute to the ATP site.

It belongs to the UMP kinase family. In terms of assembly, homohexamer.

The protein localises to the cytoplasm. The catalysed reaction is UMP + ATP = UDP + ADP. It participates in pyrimidine metabolism; CTP biosynthesis via de novo pathway; UDP from UMP (UMPK route): step 1/1. With respect to regulation, inhibited by UTP. Its function is as follows. Catalyzes the reversible phosphorylation of UMP to UDP. The polypeptide is Uridylate kinase (Leptospira borgpetersenii serovar Hardjo-bovis (strain JB197)).